Reading from the N-terminus, the 341-residue chain is Methionine import ATP-binding protein MetN 2 (341 aa).

The ABC transporter domain maps to 2-241 (IQFKNISKHY…PQHPTTKTFI (240 aa)). Position 38 to 45 (38 to 45 (GYSGAGKS)) interacts with ATP.

The protein belongs to the ABC transporter superfamily. Methionine importer (TC 3.A.1.24) family. In terms of assembly, the complex is composed of two ATP-binding proteins (MetN), two transmembrane proteins (MetI) and a solute-binding protein (MetQ).

It localises to the cell inner membrane. The enzyme catalyses L-methionine(out) + ATP + H2O = L-methionine(in) + ADP + phosphate + H(+). It carries out the reaction D-methionine(out) + ATP + H2O = D-methionine(in) + ADP + phosphate + H(+). Part of the ABC transporter complex MetNIQ involved in methionine import. Responsible for energy coupling to the transport system. The protein is Methionine import ATP-binding protein MetN 2 of Acinetobacter baylyi (strain ATCC 33305 / BD413 / ADP1).